A 900-amino-acid polypeptide reads, in one-letter code: Zinc finger protein 574 (900 aa).

3 C2H2-type zinc fingers span residues 16–38, 76–98, and 126–148; these read YVCS…QNSH, YQCL…QELH, and YECV…RQTH. Residue Ser164 is modified to Phosphoserine. The C2H2-type 4 zinc-finger motif lies at 213 to 235; the sequence is YKCSECSQLFQMPADFLEHQATH. Over residues 244–254 the composition is skewed to low complexity; sequence AEPATQQETQV. The tract at residues 244–306 is disordered; the sequence is AEPATQQETQ…RRNNSGESGG (63 aa). Residues 273–290 show a composition bias toward basic and acidic residues; that stretch reads HSYELRNELRNGEAIGRD. Ser301 is subject to Phosphoserine. 10 C2H2-type zinc fingers span residues 312 to 334, 339 to 361, 367 to 389, 395 to 416, 469 to 492, 498 to 520, 526 to 548, 554 to 576, 582 to 604, and 610 to 633; these read LFCS…LRSH, FKCP…LGDH, FLCV…RRAH, HSCP…RRTH, YRCL…RFVH, HKCS…LRTH, FPCP…RLTH, YRCG…RLVH, YRCQ…RYHH, and YKCR…LVIH. The segment at 639 to 662 adopts a C2H2-type 15; degenerate zinc-finger fold; sequence YRCSSCGAAFPSSLRLREHRCAAA. Residues 670-692 form a C2H2-type 16 zinc finger; it reads FECGTCGKKVGSAARLQAHEAAH. A disordered region spans residues 690 to 741; that stretch reads AAHAAAGPGEVLAKEPPAPRASRATRTPVAPSPTALSGTTSAAPAAPARRRG. Residue Ser721 is modified to Phosphoserine. Over residues 721–736 the composition is skewed to low complexity; that stretch reads SPTALSGTTSAAPAAP. Thr728 carries the post-translational modification Phosphothreonine. 4 C2H2-type zinc fingers span residues 742–764, 770–792, 798–820, and 826–848; these read PECS…RRIH, YPCP…RRLH, FACE…RRIH, and YSCP…RKTH. Arg836 carries the asymmetric dimethylarginine modification.

This sequence belongs to the krueppel C2H2-type zinc-finger protein family.

It is found in the nucleus. Its function is as follows. May be involved in transcriptional regulation. The sequence is that of Zinc finger protein 574 (Znf574) from Mus musculus (Mouse).